The primary structure comprises 870 residues: Elastin (870 aa).

The N-terminal stretch at 1–27 is a signal peptide; sequence MAGLTAAVPQPGVLLILLLNLLHPAQP. P39 and P75 each carry 4-hydroxyproline. Residue P87 is modified to Hydroxyproline. P105 carries the 4-hydroxyproline modification. Allysine is present on residues K122 and K126. 4-hydroxyproline occurs at positions 207, 220, 223, and 244. K290 and K309 each carry allysine. Residue P338 is modified to 4-hydroxyproline. Allysine occurs at positions 360 and 363. Hydroxyproline is present on P375. Residues P402 and P408 each carry the 4-hydroxyproline modification. A hydroxyproline mark is found at P413 and P418. Allysine occurs at positions 434, 438, 441, 485, and 488. P518 and P539 each carry 4-hydroxyproline. Allysine is present on residues K554, K558, K615, K619, and K623. 4-hydroxyproline is present on residues P637, P646, P662, and P670. An allysine mark is found at K677 and K680. P715 carries the 4-hydroxyproline modification. K730, K734, K793, and K796 each carry allysine. P842 carries the post-translational modification 4-hydroxyproline. Cysteines 860 and 865 form a disulfide.

Belongs to the elastin family. The polymeric elastin chains are cross-linked together into an extensible 3D network. Forms a ternary complex with BGN and MFAP2. Interacts with MFAP2 via divalent cations (calcium &gt; magnesium &gt; manganese) in a dose-dependent and saturating manner. Interacts with FBLN5 and FBN1. Forms a ternary complex with FBN1 and FBLN2 or FBLN5. Interacts with MFAP4 in a Ca (2+)-dependent manner; this interaction promotes ELN self-assembly. Interacts with EFEMP2 with moderate affinity. Elastin is formed through the cross-linking of its soluble precursor tropoelastin. Cross-linking is initiated through the action of lysyl oxidase on exposed lysines to form allysine. Subsequent spontaneous condensation reactions with other allysine or unmodified lysine residues result in various bi-, tri-, and tetrafunctional cross-links. The most abundant cross-links in mature elastin fibers are lysinonorleucine, allysine aldol, desmosine, and isodesmosine. Post-translationally, hydroxylation on proline residues within the sequence motif, GXPG, is most likely to be 4-hydroxy as this fits the requirement for 4-hydroxylation in vertebrates.

The protein localises to the secreted. It localises to the extracellular space. It is found in the extracellular matrix. Functionally, major structural protein of tissues such as aorta and nuchal ligament, which must expand rapidly and recover completely. Molecular determinant of the late arterial morphogenesis, stabilizing arterial structure by regulating proliferation and organization of vascular smooth muscle. This Rattus norvegicus (Rat) protein is Elastin (Eln).